The following is a 320-amino-acid chain: o-succinylbenzoate synthase (320 aa).

Lys-133 acts as the Proton donor in catalysis. Mg(2+) contacts are provided by Asp-161, Glu-190, and Asp-213. The active-site Proton acceptor is the Lys-235.

The protein belongs to the mandelate racemase/muconate lactonizing enzyme family. MenC type 1 subfamily. It depends on a divalent metal cation as a cofactor.

It catalyses the reaction (1R,6R)-6-hydroxy-2-succinyl-cyclohexa-2,4-diene-1-carboxylate = 2-succinylbenzoate + H2O. It participates in quinol/quinone metabolism; 1,4-dihydroxy-2-naphthoate biosynthesis; 1,4-dihydroxy-2-naphthoate from chorismate: step 4/7. It functions in the pathway quinol/quinone metabolism; menaquinone biosynthesis. Its function is as follows. Converts 2-succinyl-6-hydroxy-2,4-cyclohexadiene-1-carboxylate (SHCHC) to 2-succinylbenzoate (OSB). The polypeptide is o-succinylbenzoate synthase (Escherichia coli (strain K12 / MC4100 / BW2952)).